The chain runs to 146 residues: Probable flagellum biosynthesis repressor protein FlbT 1 (146 aa).

The protein belongs to the FlbT family.

Has a post-transcriptional repressor function in flagellum biogenesis. Associates with the 5'-UTR of fljK mRNA and promotes its degradation. The protein is Probable flagellum biosynthesis repressor protein FlbT 1 of Bradyrhizobium diazoefficiens (strain JCM 10833 / BCRC 13528 / IAM 13628 / NBRC 14792 / USDA 110).